The chain runs to 237 residues: Sugar fermentation stimulation protein homolog (237 aa).

Belongs to the SfsA family.

This is Sugar fermentation stimulation protein homolog from Pseudomonas putida (strain W619).